The primary structure comprises 164 residues: Interferon gamma (164 aa).

The N-terminal stretch at 1 to 19 (MTCQTYNLFVLSVIMIYYG) is a signal peptide. Asparagine 42 and asparagine 61 each carry an N-linked (GlcNAc...) asparagine glycan.

It belongs to the type II (or gamma) interferon family. Homodimer.

The protein localises to the secreted. Functionally, produced by lymphocytes activated by specific antigens or mitogens. IFN-gamma, in addition to having antiviral activity, has important immunoregulatory functions. It is a potent activator of macrophages, it has antiproliferative effects on transformed cells and it can potentiate the antiviral and antitumor effects of the type I interferons. The chain is Interferon gamma (IFNG) from Coturnix japonica (Japanese quail).